We begin with the raw amino-acid sequence, 238 residues long: UDP-2,3-diacylglucosamine hydrolase (238 aa).

Mn(2+) contacts are provided by Asp8, His10, Asp41, Asn78, and His113. 78-79 (NR) is a binding site for substrate. Substrate contacts are provided by Asp121, Ser159, Asn163, Lys166, and His194. Mn(2+)-binding residues include His194 and His196.

Belongs to the LpxH family. Mn(2+) is required as a cofactor.

Its subcellular location is the cell inner membrane. It carries out the reaction UDP-2-N,3-O-bis[(3R)-3-hydroxytetradecanoyl]-alpha-D-glucosamine + H2O = 2-N,3-O-bis[(3R)-3-hydroxytetradecanoyl]-alpha-D-glucosaminyl 1-phosphate + UMP + 2 H(+). The protein operates within glycolipid biosynthesis; lipid IV(A) biosynthesis; lipid IV(A) from (3R)-3-hydroxytetradecanoyl-[acyl-carrier-protein] and UDP-N-acetyl-alpha-D-glucosamine: step 4/6. Its function is as follows. Hydrolyzes the pyrophosphate bond of UDP-2,3-diacylglucosamine to yield 2,3-diacylglucosamine 1-phosphate (lipid X) and UMP by catalyzing the attack of water at the alpha-P atom. Involved in the biosynthesis of lipid A, a phosphorylated glycolipid that anchors the lipopolysaccharide to the outer membrane of the cell. The chain is UDP-2,3-diacylglucosamine hydrolase from Shewanella piezotolerans (strain WP3 / JCM 13877).